The following is a 296-amino-acid chain: Phosphatidylserine decarboxylase proenzyme (296 aa).

Active-site charge relay system; for autoendoproteolytic cleavage activity residues include D100, H157, and S263. The Schiff-base intermediate with substrate; via pyruvic acid; for decarboxylase activity role is filled by S263. At S263 the chain carries Pyruvic acid (Ser); by autocatalysis.

It belongs to the phosphatidylserine decarboxylase family. PSD-B subfamily. Prokaryotic type I sub-subfamily. As to quaternary structure, heterodimer of a large membrane-associated beta subunit and a small pyruvoyl-containing alpha subunit. Pyruvate serves as cofactor. In terms of processing, is synthesized initially as an inactive proenzyme. Formation of the active enzyme involves a self-maturation process in which the active site pyruvoyl group is generated from an internal serine residue via an autocatalytic post-translational modification. Two non-identical subunits are generated from the proenzyme in this reaction, and the pyruvate is formed at the N-terminus of the alpha chain, which is derived from the carboxyl end of the proenzyme. The autoendoproteolytic cleavage occurs by a canonical serine protease mechanism, in which the side chain hydroxyl group of the serine supplies its oxygen atom to form the C-terminus of the beta chain, while the remainder of the serine residue undergoes an oxidative deamination to produce ammonia and the pyruvoyl prosthetic group on the alpha chain. During this reaction, the Ser that is part of the protease active site of the proenzyme becomes the pyruvoyl prosthetic group, which constitutes an essential element of the active site of the mature decarboxylase.

It localises to the cell membrane. It catalyses the reaction a 1,2-diacyl-sn-glycero-3-phospho-L-serine + H(+) = a 1,2-diacyl-sn-glycero-3-phosphoethanolamine + CO2. The protein operates within phospholipid metabolism; phosphatidylethanolamine biosynthesis; phosphatidylethanolamine from CDP-diacylglycerol: step 2/2. In terms of biological role, catalyzes the formation of phosphatidylethanolamine (PtdEtn) from phosphatidylserine (PtdSer). The chain is Phosphatidylserine decarboxylase proenzyme from Actinobacillus pleuropneumoniae serotype 7 (strain AP76).